A 124-amino-acid chain; its full sequence is Small ribosomal subunit protein uS12 (124 aa).

Asp89 carries the 3-methylthioaspartic acid modification.

It belongs to the universal ribosomal protein uS12 family. In terms of assembly, part of the 30S ribosomal subunit. Contacts proteins S8 and S17. May interact with IF1 in the 30S initiation complex.

With S4 and S5 plays an important role in translational accuracy. Functionally, interacts with and stabilizes bases of the 16S rRNA that are involved in tRNA selection in the A site and with the mRNA backbone. Located at the interface of the 30S and 50S subunits, it traverses the body of the 30S subunit contacting proteins on the other side and probably holding the rRNA structure together. The combined cluster of proteins S8, S12 and S17 appears to hold together the shoulder and platform of the 30S subunit. In Tolumonas auensis (strain DSM 9187 / NBRC 110442 / TA 4), this protein is Small ribosomal subunit protein uS12.